Reading from the N-terminus, the 495-residue chain is UDP-N-acetylmuramoyl-L-alanyl-D-glutamate--2,6-diaminopimelate ligase (495 aa).

Ser29 contacts UDP-N-acetyl-alpha-D-muramoyl-L-alanyl-D-glutamate. Residue 111 to 117 (GTNGKTS) coordinates ATP. Residues 153 to 154 (TT), Ser180, Gln186, and Arg188 each bind UDP-N-acetyl-alpha-D-muramoyl-L-alanyl-D-glutamate. Lys220 carries the post-translational modification N6-carboxylysine. Meso-2,6-diaminopimelate contacts are provided by residues Arg384, 408-411 (DNPR), Gly459, and Glu463. The Meso-diaminopimelate recognition motif signature appears at 408–411 (DNPR).

Belongs to the MurCDEF family. MurE subfamily. Mg(2+) serves as cofactor. In terms of processing, carboxylation is probably crucial for Mg(2+) binding and, consequently, for the gamma-phosphate positioning of ATP.

It localises to the cytoplasm. The catalysed reaction is UDP-N-acetyl-alpha-D-muramoyl-L-alanyl-D-glutamate + meso-2,6-diaminopimelate + ATP = UDP-N-acetyl-alpha-D-muramoyl-L-alanyl-gamma-D-glutamyl-meso-2,6-diaminopimelate + ADP + phosphate + H(+). It functions in the pathway cell wall biogenesis; peptidoglycan biosynthesis. Its function is as follows. Catalyzes the addition of meso-diaminopimelic acid to the nucleotide precursor UDP-N-acetylmuramoyl-L-alanyl-D-glutamate (UMAG) in the biosynthesis of bacterial cell-wall peptidoglycan. The polypeptide is UDP-N-acetylmuramoyl-L-alanyl-D-glutamate--2,6-diaminopimelate ligase (Xylella fastidiosa (strain Temecula1 / ATCC 700964)).